The following is a 246-amino-acid chain: MFSSKTEYDRGVNTFSPEGRIFQIEYAIEAIKLGSTSLGIQTPDAVIIAAEKRVPSTLVDPSSVNKILEIDHHIGTVLSGMVADARILVDHARVEAQNHRFTYDEPMSVESCALATCDLSVQFGESGGRKKLMSRPFGVSLLIAGVDENGPQLWQTDPSGTYTRYDAQAIGGGAEAAQTVFSERYHRNMTVEEAENLTVQILRQVMEEKLTKTSVEIAIVPVSTGRLQIYDQEQIQRIIDRQAEEN.

The protein belongs to the peptidase T1A family. The 26S proteasome consists of a 20S proteasome core and two 19S regulatory subunits. The 20S proteasome core is composed of 28 subunits that are arranged in four stacked rings, resulting in a barrel-shaped structure. The two end rings are each formed by seven alpha subunits, and the two central rings are each formed by seven beta subunits. The catalytic chamber with the active sites is on the inside of the barrel.

The protein resides in the cytoplasm. The protein localises to the nucleus. In terms of biological role, the proteasome is a multicatalytic proteinase complex which is characterized by its ability to cleave peptides with Arg, Phe, Tyr, Leu, and Glu adjacent to the leaving group at neutral or slightly basic pH. The proteasome has an ATP-dependent proteolytic activity. This chain is Proteasome subunit alpha type-5, found in Trypanosoma brucei brucei.